A 112-amino-acid chain; its full sequence is Large ribosomal subunit protein eL30 (112 aa).

This sequence belongs to the eukaryotic ribosomal protein eL30 family. In terms of tissue distribution, expressed in roots and leaves.

The polypeptide is Large ribosomal subunit protein eL30 (Triticum aestivum (Wheat)).